Reading from the N-terminus, the 113-residue chain is U11-theraphotoxin-Hhn1a (113 aa).

The signal sequence occupies residues 1–21 (MNTVRATFLLVFVLAVSLGQA). Residues 22–74 (DKDENRMEMQEKTEQGKSYLDFAENLLLQKLEELEAKLLEEDSEESRNSRQKR) constitute a propeptide that is removed on maturation. Positions 60 to 69 (LEEDSEESRN) are enriched in basic and acidic residues. Positions 60 to 82 (LEEDSEESRNSRQKRCIGEGVPC) are disordered. 3 disulfide bridges follow: Cys-75–Cys-90, Cys-82–Cys-95, and Cys-89–Cys-110.

It belongs to the neurotoxin 14 (magi-1) family. 01 (HNTX-16) subfamily. In terms of tissue distribution, expressed by the venom gland.

The protein resides in the secreted. Probable ion channel inhibitor. This is U11-theraphotoxin-Hhn1a from Cyriopagopus hainanus (Chinese bird spider).